A 154-amino-acid chain; its full sequence is Myoglobin-2 (154 aa).

Residues 2 to 148 form the Globin domain; sequence GLSDGEWQLV…FRKDIATKYK (147 aa). H65 is a binding site for nitrite. An O2-binding site is contributed by H65. H94 lines the heme b pocket.

This sequence belongs to the globin family. In terms of assembly, monomeric.

Its subcellular location is the cytoplasm. The protein resides in the sarcoplasm. It catalyses the reaction Fe(III)-heme b-[protein] + nitric oxide + H2O = Fe(II)-heme b-[protein] + nitrite + 2 H(+). The enzyme catalyses H2O2 + AH2 = A + 2 H2O. Its function is as follows. Monomeric heme protein which primary function is to store oxygen and facilitate its diffusion within muscle tissues. Reversibly binds oxygen through a pentacoordinated heme iron and enables its timely and efficient release as needed during periods of heightened demand. Depending on the oxidative conditions of tissues and cells, and in addition to its ability to bind oxygen, it also has a nitrite reductase activity whereby it regulates the production of bioactive nitric oxide. Under stress conditions, like hypoxia and anoxia, it also protects cells against reactive oxygen species thanks to its pseudoperoxidase activity. The chain is Myoglobin-2 (MB2) from Stenella attenuata (Pantropical spotted dolphin).